A 580-amino-acid polypeptide reads, in one-letter code: RuBisCO large subunit-binding protein subunit alpha, chloroplastic (580 aa).

The segment covering 1 to 17 has biased composition (polar residues); that stretch reads MAQSQLAKGSRQTTGRP. A disordered region spans residues 1-24; it reads MAQSQLAKGSRQTTGRPFQNKPAR.

Belongs to the chaperonin (HSP60) family. Oligomer of probably six alpha and six beta subunits.

It localises to the plastid. The protein localises to the chloroplast. Its function is as follows. This protein binds RuBisCO small and large subunits and is implicated in the assembly of the enzyme oligomer. This chain is RuBisCO large subunit-binding protein subunit alpha, chloroplastic, found in Chlamydomonas reinhardtii (Chlamydomonas smithii).